The sequence spans 302 residues: Bifunctional protein FolD (302 aa).

Residues 171–173, Ser196, and Ile237 contribute to the NADP(+) site; that span reads GRS.

It belongs to the tetrahydrofolate dehydrogenase/cyclohydrolase family. Homodimer.

The enzyme catalyses (6R)-5,10-methylene-5,6,7,8-tetrahydrofolate + NADP(+) = (6R)-5,10-methenyltetrahydrofolate + NADPH. It catalyses the reaction (6R)-5,10-methenyltetrahydrofolate + H2O = (6R)-10-formyltetrahydrofolate + H(+). It functions in the pathway one-carbon metabolism; tetrahydrofolate interconversion. In terms of biological role, catalyzes the oxidation of 5,10-methylenetetrahydrofolate to 5,10-methenyltetrahydrofolate and then the hydrolysis of 5,10-methenyltetrahydrofolate to 10-formyltetrahydrofolate. This chain is Bifunctional protein FolD, found in Sphingopyxis alaskensis (strain DSM 13593 / LMG 18877 / RB2256) (Sphingomonas alaskensis).